A 1314-amino-acid polypeptide reads, in one-letter code: Angiotensin-converting enzyme (1314 aa).

Residues 1–35 form the signal peptide; sequence MGAASGQRGQGPPSPLLLLWLSLLLLLLPPSPAPA. Residues 36 to 1265 lie on the Extracellular side of the membrane; it reads LDPGLQPGNF…LEPQQARVGQ (1230 aa). N-linked (GlcNAc...) asparagine glycans are attached at residues Asn-44, Asn-60, Asn-80, Asn-117, and Asn-166. 2 Peptidase M2 domains span residues 46–630 and 649–1228; these read SADE…LGWP and VTDE…LGWP. Cysteines 163 and 171 form a disulfide. Tyr-237 contributes to the chloride binding site. Asn-324 carries N-linked (GlcNAc...) asparagine glycosylation. An intrachain disulfide couples Cys-365 to Cys-383. Position 396 (His-396) interacts with Zn(2+). Glu-397 functions as the Proton acceptor 1 in the catalytic mechanism. 2 residues coordinate Zn(2+): His-400 and Glu-424. Residue Asn-515 is glycosylated (N-linked (GlcNAc...) asparagine). His-526 acts as the Proton donor 1 in catalysis. Arg-535 serves as a coordination point for chloride. A disulfide bond links Cys-551 and Cys-563. 4 N-linked (GlcNAc...) asparagine glycosylation sites follow: Asn-683, Asn-701, Asn-720, and Asn-766. A disulfide bridge connects residues Cys-763 and Cys-769. Residues Arg-797 and Tyr-835 each coordinate chloride. Asn-948 carries an N-linked (GlcNAc...) asparagine glycan. The cysteines at positions 963 and 981 are disulfide-linked. His-994 contacts Zn(2+). The active-site Proton acceptor 2 is Glu-995. Positions 998 and 1022 each coordinate Zn(2+). Chloride contacts are provided by Trp-1096 and Arg-1100. His-1124 serves as the catalytic Proton donor 2. Position 1133 (Arg-1133) interacts with chloride. A disulfide bridge links Cys-1149 with Cys-1161. A glycan (N-linked (GlcNAc...) asparagine) is linked at Asn-1197. A juxtamembrane stalk region spans residues 1221–1262; sequence HGETLGWPEYNWTPNTARSEGPFPESGRVNFLGMYLEPQQAR. Residues 1266 to 1282 form a helical membrane-spanning segment; that stretch reads WVLLFLGVSLLVATLGL. At 1283-1314 the chain is on the cytoplasmic side; the sequence is THRLFSIRQHGHSLHRPHRGPQFGSEVELRHS. Residues 1293 to 1314 form a disordered region; it reads GHSLHRPHRGPQFGSEVELRHS. Ser-1307 bears the Phosphoserine mark.

The protein belongs to the peptidase M2 family. Monomer and homodimer; homodimerizes following binding to an inhibitor. Interacts with calmodulin (CALM1, CALM2 or CALM3); interaction takes place in the cytoplasmic region and regulates phosphorylation and proteolytic cleavage. Zn(2+) is required as a cofactor. Requires chloride as cofactor. Produced following proteolytic cleavage by secretase enzymes that cleave the transmembrane form in the juxtamembrane stalk region upstream of the transmembrane region. Cleavage can take place at different sites of the juxtamembrane stalk region. In terms of processing, phosphorylated by CK2 on Ser-1307; which allows membrane retention. Phosphorylated on tyrosine residues on its extracellular part, promoting cleavage by secretase enzymes and formation of the soluble form (Angiotensin-converting enzyme, soluble form). As to expression, widely expressed with dominant expression in lung and kidney.

The protein localises to the cell membrane. Its subcellular location is the cytoplasm. The protein resides in the secreted. It carries out the reaction Release of a C-terminal dipeptide, oligopeptide-|-Xaa-Yaa, when Xaa is not Pro, and Yaa is neither Asp nor Glu. Thus, conversion of angiotensin I to angiotensin II, with increase in vasoconstrictor activity, but no action on angiotensin II.. The enzyme catalyses angiotensin I + H2O = L-histidyl-L-leucine + angiotensin II. It catalyses the reaction bradykinin + H2O = L-Phe-L-Arg + bradykinin(1-7). The catalysed reaction is substance P + H2O = substance P(1-9) + L-Leu-L-Met-NH2. It carries out the reaction substance P + H2O = substance P(1-8) + Gly-L-Leu-L-Met-NH2. The enzyme catalyses substance P + H2O = L-Phe-L-Phe-Gly-L-Leu-L-Met-NH2 + substance P(1-6). It catalyses the reaction neurotensin + H2O = neurotensin(1-11) + L-isoleucyl-L-leucine. The catalysed reaction is goralatide + H2O = N-acetyl-L-seryl-L-aspartate + L-lysyl-L-proline. It carries out the reaction Met-enkephalin + H2O = L-phenylalanyl-L-methionine + L-tyrosylglycylglycine. The enzyme catalyses Leu-enkephalin + H2O = L-tyrosylglycylglycine + L-phenylalanyl-L-leucine. It catalyses the reaction Met-enkephalin-Arg-Phe + H2O = L-arginyl-L-phenylalanine + Met-enkephalin. The dipeptidyl carboxypeptidase activity is strongly activated by chloride. The dipeptidyl carboxypeptidase activity is specifically inhibited by lisinopril, captopril and enalaprilat. With respect to regulation, strongly inhibited by lisinopril and captopril. Its function is as follows. Dipeptidyl carboxypeptidase that removes dipeptides from the C-terminus of a variety of circulating hormones, such as angiotensin I, bradykinin or enkephalins, thereby playing a key role in the regulation of blood pressure, electrolyte homeostasis or synaptic plasticity. Composed of two similar catalytic domains, each possessing a functional active site, with different selectivity for substrates. Plays a major role in the angiotensin-renin system that regulates blood pressure and sodium retention by the kidney by converting angiotensin I to angiotensin II, resulting in an increase of the vasoconstrictor activity of angiotensin. Also able to inactivate bradykinin, a potent vasodilator, and therefore enhance the blood pressure response. Acts as a regulator of synaptic transmission by mediating cleavage of neuropeptide hormones, such as substance P, neurotensin or enkephalins. Catalyzes degradation of different enkephalin neuropeptides (Met-enkephalin, Leu-enkephalin, Met-enkephalin-Arg-Phe and possibly Met-enkephalin-Arg-Gly-Leu). Acts as a regulator of synaptic plasticity in the nucleus accumbens of the brain by mediating cleavage of Met-enkephalin-Arg-Phe, a strong ligand of Mu-type opioid receptor OPRM1, into Met-enkephalin. Met-enkephalin-Arg-Phe cleavage by ACE decreases activation of OPRM1, leading to long-term synaptic potentiation of glutamate release. Also acts as a regulator of hematopoietic stem cell differentiation by mediating degradation of hemoregulatory peptide N-acetyl-SDKP (AcSDKP). Acts as a regulator of cannabinoid signaling pathway by mediating degradation of hemopressin, an antagonist peptide of the cannabinoid receptor CNR1. Involved in amyloid-beta metabolism by catalyzing degradation of Amyloid-beta protein 40 and Amyloid-beta protein 42 peptides, thereby preventing plaque formation. Catalyzes cleavage of cholecystokinin (maturation of Cholecystokinin-8 and Cholecystokinin-5) and Gonadoliberin-1 (both maturation and degradation) hormones. Degradation of hemoregulatory peptide N-acetyl-SDKP (AcSDKP) and amyloid-beta proteins is mediated by the N-terminal catalytic domain, while angiotensin I and cholecystokinin cleavage is mediated by the C-terminal catalytic region. Soluble form that is released in blood plasma and other body fluids following proteolytic cleavage in the juxtamembrane stalk region. Functionally, isoform produced by alternative promoter usage that is specifically expressed in spermatocytes and adult testis, and which is required for male fertility. In contrast to somatic isoforms, only contains one catalytic domain. Acts as a dipeptidyl carboxypeptidase that removes dipeptides from the C-terminus of substrates. The identity of substrates that are needed for male fertility is unknown. May also have a glycosidase activity which releases GPI-anchored proteins from the membrane by cleaving the mannose linkage in the GPI moiety. The GPIase activity was reported to be essential for the egg-binding ability of the sperm. This activity is however unclear and has been challenged by other groups, suggesting that it may be indirect. The polypeptide is Angiotensin-converting enzyme (Mesocricetus auratus (Golden hamster)).